Reading from the N-terminus, the 658-residue chain is Glycine--tRNA ligase beta subunit (658 aa).

The protein belongs to the class-II aminoacyl-tRNA synthetase family. Tetramer of two alpha and two beta subunits.

It is found in the cytoplasm. The enzyme catalyses tRNA(Gly) + glycine + ATP = glycyl-tRNA(Gly) + AMP + diphosphate. This chain is Glycine--tRNA ligase beta subunit, found in Rickettsia bellii (strain OSU 85-389).